The primary structure comprises 259 residues: Global transcriptional regulator CodY (259 aa).

Positions 1–155 (MNLLEKTRKI…GATVVGMEIL (155 aa)) are GAF domain. Residues 203-222 (ASKIADRVGITRSVIVNALR) constitute a DNA-binding region (H-T-H motif). Residue Ser-215 is modified to Phosphoserine.

It belongs to the CodY family.

Its subcellular location is the cytoplasm. DNA-binding global transcriptional regulator which is involved in the adaptive response to starvation and acts by directly or indirectly controlling the expression of numerous genes in response to nutrient availability. During rapid exponential growth, CodY is highly active and represses genes whose products allow adaptation to nutrient depletion. The sequence is that of Global transcriptional regulator CodY from Geobacillus thermodenitrificans (strain NG80-2).